Consider the following 250-residue polypeptide: 2,3-bisphosphoglycerate-dependent phosphoglycerate mutase (250 aa).

Substrate contacts are provided by residues 8 to 15, 21 to 22, arginine 60, 87 to 90, lysine 98, 114 to 115, and 183 to 184; these read RHGESQWN, TG, ERHY, RR, and GN. Catalysis depends on histidine 9, which acts as the Tele-phosphohistidine intermediate. The active-site Proton donor/acceptor is glutamate 87.

It belongs to the phosphoglycerate mutase family. BPG-dependent PGAM subfamily. In terms of assembly, homodimer.

The enzyme catalyses (2R)-2-phosphoglycerate = (2R)-3-phosphoglycerate. It functions in the pathway carbohydrate degradation; glycolysis; pyruvate from D-glyceraldehyde 3-phosphate: step 3/5. Catalyzes the interconversion of 2-phosphoglycerate and 3-phosphoglycerate. The chain is 2,3-bisphosphoglycerate-dependent phosphoglycerate mutase from Bordetella avium (strain 197N).